Reading from the N-terminus, the 153-residue chain is CRIB domain-containing protein RIC4 (153 aa).

Positions 99–112 (IGVPTNVKHVSHIG) constitute a CRIB domain.

In terms of assembly, interacts with ARAC4/ROP2 and ARAC11/ROP1. As to expression, expressed in roots, leaves, stems, flowers, siliques and pollen.

It is found in the cell membrane. Functionally, functions as a downstream effector of Rho-related GTP binding proteins of the 'Rho of Plants' (ROPs) family. Participates in the propagation of ROP GTPase signals in specific cellular responses. Required for actin cortical microfilament assembly. Activated by ARAC4/ROP2 to promote the assembly of cortical actin microfilaments required for lobe formation and lateral expansion of pavement cells. Interaction with, and activation by ARAC4/ROP2 is inhibited by RIC1. Functions as a downstream effector of ARAC11/ROP1 to promote the assembly of apical F-actin associated with vesicle accumulation in the tip of the growing pollen tube. Counteracts the ARAC11/ROP1-RIC3 pathway, which activates calcium signaling that leads to apical F-actin disassembly associated with exocytosis, to control actin dynamics and pollen tube apical growth. Downstream of ARAC11/ROP1, is involved in the growth responses to the root-colonizing endophytic fungus P.indica. In Arabidopsis thaliana (Mouse-ear cress), this protein is CRIB domain-containing protein RIC4 (RIC4).